The sequence spans 483 residues: SWI/SNF-related matrix-associated actin-dependent regulator of chromatin subfamily D member 3 (483 aa).

Position 2 is an N-acetylalanine (A2). Residues 26–102 (VRPGMPSGAR…ARSRSAKRRK (77 aa)) are disordered. Residues 78 to 87 (QSQAQSQGQP) are compositionally biased toward low complexity. Position 178 is a phosphoserine (S178). Positions 258-335 (YQPPQFKLDP…PQRLTALLLP (78 aa)) constitute an SWIB/MDM2 domain.

The protein belongs to the SMARCD family. As to quaternary structure, component of the multiprotein chromatin-remodeling complexes SWI/SNF: SWI/SNF-A (BAF), SWI/SNF-B (PBAF) and related complexes. The canonical complex contains a catalytic subunit (either SMARCA4/BRG1/BAF190A or SMARCA2/BRM/BAF190B) and at least SMARCE1, ACTL6A/BAF53, SMARCC1/BAF155, SMARCC2/BAF170, and SMARCB1/SNF5/BAF47. Other subunits specific to each of the complexes may also be present permitting several possible combinations developmentally and tissue specific. Component of the BAF complex, which includes at least actin (ACTB), ARID1A/BAF250A, ARID1B/BAF250B, SMARCA2/BRM, SMARCA4/BRG1/BAF190A, ACTL6A/BAF53, ACTL6B/BAF53B, SMARCE1/BAF57, SMARCC1/BAF155, SMARCC2/BAF170, SMARCB1/SNF5/INI1, and one or more SMARCD1/BAF60A, SMARCD2/BAF60B, or SMARCD3/BAF60C. In muscle cells, the BAF complex also contains DPF3. Component of neural progenitors-specific chromatin remodeling complex (npBAF complex) composed of at least, ARID1A/BAF250A or ARID1B/BAF250B, SMARCD1/BAF60A, SMARCD3/BAF60C, SMARCA2/BRM/BAF190B, SMARCA4/BRG1/BAF190A, SMARCB1/BAF47, SMARCC1/BAF155, SMARCE1/BAF57, SMARCC2/BAF170, PHF10/BAF45A, ACTL6A/BAF53A and actin. Component of neuron-specific chromatin remodeling complex (nBAF complex) composed of at least, ARID1A/BAF250A or ARID1B/BAF250B, SMARCD1/BAF60A, SMARCD3/BAF60C, SMARCA2/BRM/BAF190B, SMARCA4/BRG1/BAF190A, SMARCB1/BAF47, SMARCC1/BAF155, SMARCE1/BAF57, SMARCC2/BAF170, DPF1/BAF45B, DPF3/BAF45C, ACTL6B/BAF53B and actin. May be a component of the SWI/SNF-B (PBAF) chromatin remodeling complex, at least composed of SMARCA4/BRG1, SMARCB1/BAF47/SNF5, ACTL6A/BAF53A or ACTL6B/BAF53B, SMARCE1/BAF57, SMARCD1/BAF60A, SMARCD2/BAF60B, perhaps SMARCD3/BAF60C, SMARCC1/BAF155, SMARCC2/BAF170, PBRM1/BAF180, ARID2/BAF200 and actin. Interacts with SMARCA4/BRG1/BAF190A. Component of SWI/SNF (GBAF) subcomplex, which includes at least BICRA or BICRAL (mutually exclusive), BRD9, SS18, SMARCA2/BRM, SMARCA4/BRG1/BAF190A, ACTL6A/BAF53, SMARCC1/BAF155, and SMARCD1/BAF60A. The precise distribution of the related SMARCD1, SMARCD2 and SMARCD3 proteins among these and other SWI/SNF nucleosome-remodeling complexes is not fully known. May allow recruitment of SWI/SNF containing complexes specifically to promoters where these factors are located. Also interacts with several nuclear receptors including PPARG/NR1C3, RXRA/NR1F1, ESR1, NR5A1, NR5A2/LRH1 and other transcriptional activators including the HLH protein SREBF1/SREBP1 and the homeobox protein PBX1. Interacts with PRDM1/BLIMP1. Isoform 2 and isoform 1 are expressed in brain, heart, kidney, placenta, prostate, salivary gland, spleen, testis, thyroid, trachea and uterus. Isoform 1 is also expressed in skeletal muscle and adipose tissue.

It is found in the nucleus. Functionally, involved in transcriptional activation and repression of select genes by chromatin remodeling (alteration of DNA-nucleosome topology). Component of SWI/SNF chromatin remodeling complexes that carry out key enzymatic activities, changing chromatin structure by altering DNA-histone contacts within a nucleosome in an ATP-dependent manner. Stimulates nuclear receptor mediated transcription. Belongs to the neural progenitors-specific chromatin remodeling complex (npBAF complex) and the neuron-specific chromatin remodeling complex (nBAF complex). During neural development a switch from a stem/progenitor to a postmitotic chromatin remodeling mechanism occurs as neurons exit the cell cycle and become committed to their adult state. The transition from proliferating neural stem/progenitor cells to postmitotic neurons requires a switch in subunit composition of the npBAF and nBAF complexes. As neural progenitors exit mitosis and differentiate into neurons, npBAF complexes which contain ACTL6A/BAF53A and PHF10/BAF45A, are exchanged for homologous alternative ACTL6B/BAF53B and DPF1/BAF45B or DPF3/BAF45C subunits in neuron-specific complexes (nBAF). The npBAF complex is essential for the self-renewal/proliferative capacity of the multipotent neural stem cells. The nBAF complex along with CREST plays a role regulating the activity of genes essential for dendrite growth. The chain is SWI/SNF-related matrix-associated actin-dependent regulator of chromatin subfamily D member 3 (SMARCD3) from Homo sapiens (Human).